Here is a 2352-residue protein sequence, read N- to C-terminus: MAELVRPKKPKHRERAQSDYTPPIPDRPAIVNGLRLPAAPSHTIEDLPERSASPEPEDQDISLTEDSLKREEASEPLKDVRSSPVRPAPPPPRVSQEREAPPIPPRSMIFPRSTSMVAESRKESTTAVAPKRSVAVASYPAVPELAELPSYTDALQHPQVYPSINGGLQHSHSATAIPEKTRFSAPVERERVREGEAPPMYPSIKTYERNEHGLMTEENLVTFYHNPLYEHAEMFVDQFIKTEEVPTQSGSLFPLLARLRTVCDLMTVSEVKGKENTEELQKCLRECWVQQSLSVDAKGKCGDNNDGTGRASYFSFELQQAVLDQMKKLLSTNRSNLMDHSVCEETSFRSIALQIQWQVIIINNNFMAENGLSTNCPPSLIASVPMTPGRVALRTALSDIFYHLRYPRLSKRFIDTLVGWIKELTCVLNMRQSCDDGIFLLCHLLRLPSPIDQWASPFVQTFIQSQSAPKLKLDYCVALLTHLLNPIKARESFLRHVAQSEKEESTWEILADDDDGEANEFSFVTINESDLTAFLDQFPISELYSIAYLAFTSYSDKGSQFTAMIAFQLLLMKILDNGLTSYSQPGYKMFCKQIGISLKHSVRELCSNWRLIRDQVRPGEEHHLQKEVDRVVLLALNYLIHQDTLGLFQFVVSLPYAVVSEECRSRCEYALRSNKKMSIHEIYDTPICEVRARISSQGISKRIGALGAQDSEFLVNSLASIGSYSNSDVSQLLKELIDVCFCDEDTRDDLYKCGGEAIGQILIKRPETLHQLLTIIDRNLQHMDSYAINVLSSSRLFECRLTEPMISIIGKWLINNPPEHGANRLARRVLSGLHWGLAVDGHNLWIDVDVHTIAADTVVKAHSVHCSRSNSMISKSINKISKLASKVGDAESLFQQFCWDLLVKLKLPTIPSSLVQNDLTAHYVRIVQNCEDDVVVYLEKGVPLLSDLVTSGSSVASVVLLSRLIAQHYQNVNLMAADKNFMTTFERLLHIDQLPYAVQWLSGPSSTPTPIVKLICSAISYYSAKLPPRDYLRAWITLLCAARTGWNEDAVTYQIVGTIARIAFVNDTHKLYEITGIIFQAYQQQLAAEKNQSKGIMSMFSSDNTVSPLIPDSMLSISPFASYVMLRVEQKSFNTFYGHFFETLTKKDKYTLDNAVKKASSKCSITVPVERLAIFRWAKLVTVCNDHQLLPILLQQLSGSAYRLRKANNLNLCYARRLIDDPQMQDVMAACRKAIEESTIETKGLSKAVVGWLFTKHEVTRTGFDFSVFDLDYLLQLILAGDKNMWLDFVNMPYFNSEEFSERKLYSVTCQLSPKNRESPLPPEIGSPRSRSSAKPFPVLPVHSGLPQAPLIDPSILFQQHTVLQLASPFINTIKQLSKQFAQSGDRMSMDDDSYCKQIKALYQPTQQTIPVEIRCSYCSKPKACTMSIKPNVLNSEIDLQMTQNRTKRFEFWNELYASIVDKAAVATASIEHLSVLVAKMTSALHPGTRNNVQLTGHSLFYLITSSVGENELLFSVASDSFCNSLRSLGEEYVKFRPEEQMDVMQLALDGFVLSEPLVEVFTPEVLNSDDLCTAYRKLSDAVRMPERSKMALQLLGRLGMQQAAAGLPPHQFAALLPIAFANLASQPDPSSPLHALCLQHVIFFVFHHFPDNIVNGLDLTLDGCNTNSTPASLLDAIVDKLDANDYLKKKNSFDLGAAKADECARILSKRLDEARTKLPNFYGIWSRYLDSVTRLAQLFLFVPIRDGYEPNKSVSVLQRECYEYFTRVAAVFSPLIAPYSPTHPPFSTSHEAQAMLVLDRFVDFLSALHFNSSIPPGMQNIQSLVWQYYCEKLSILTHGTQHYYDVIERQLVRLNWQALWPSRLAITAMENCLDTRSQDCASFISQMVARIPWSNILQTMHEDSRPSYLASLFGVLVRLAARPRNYDKVRASLLELCKSFSLRSDWNKIYPEDAAGIASAVTKCLPSDSLSNPVEMVSVIQVIWRKICCFVVREPFSEVSLQKQKLWIQTESSLLLKAESSQIPAAYNSLISDVNALALNHSNLREFRVVTRELTAMWKNITDAKLGEALVSIWSEYLAANPTSPLVLTSVNTLVDSLNIDQLTTALKVIEKVICAYFLRTDSNWAELLHWIQFPTGSLKSIKSYLMTVPSSENKVQMLPLTLKIFMDYGGVDENKFFDLHHYVISIRPKHVASESGFICLLARHLQWMANRSSALPAHFAPSDDLLSSLIKYLGKASKDESSFLTALISSKKTAYSQKMRVTLHILELYLTQQTLGEGKRPRCDANSPVLNSRISTLKDLAQQKSNQNMSNAFNKATAYFVQIETHRIQSSPKLLLEIGRSAFGDLFLTD.

Disordered stretches follow at residues 1-112 (MAEL…IFPR) and 1315-1335 (KNRE…SSAK). Residues 66–81 (DSLKREEASEPLKDVR) show a composition bias toward basic and acidic residues.

This sequence belongs to the EPG5 family. As to expression, expressed in pharyngeal and body wall muscles and intestine cells.

Its subcellular location is the cytoplasm. The protein resides in the cytoplasmic vesicle. The protein localises to the phagosome membrane. Involved in the maturation of autophagosomes into autolysosomes during starvation-induced autotrophy. Specifically, involved in the clearance of apoptotic cells by promoting the delivery of engulfed apoptotic cells to the lysosome. The chain is Ectopic P granules protein 5 from Caenorhabditis elegans.